The chain runs to 432 residues: MTLWVLGLNHQTAPMELRERASFVGDALPRALDSLRNLPNVNEAALLSTCNRTELYAETTNAQMLLNWLEQHRPGLQNHLYQYSDAAAVRHLFRVATGLDSMVLGESQILGQVKDSWSMARTHGTLGNTLDRLFQHSFSVAKHARTNTRIGTNPVSIASTAVRLAQDAFSPLNESTVLLIGTGETIQLAAKHLSEGRVQRLLIANRTHAKAQMLASQHGGYALPLTELNLHLAEADIIFSATAAPTPIVTQSNVESALHIRKRKPMLLFDLAIPRDIETEVGTLTDAYLYTIDDLERAVEENRRSRREAAETAEAIIELQVKRYMDTLQAHAHQAPLRRLRTFGTTTRDELLTRARQQLANGRPAGEVLEQLAHGLTNRLLHPPTAALREAALANNTELVRAAEQLFPEKPGYHHPTLQTTIVKTDETDPAS.

Substrate is bound by residues 49-52 (TCNR), Ser-101, 106-108 (ESQ), and Gln-112. Cys-50 serves as the catalytic Nucleophile. Residue 181 to 186 (GTGETI) participates in NADP(+) binding.

Belongs to the glutamyl-tRNA reductase family. Homodimer.

The catalysed reaction is (S)-4-amino-5-oxopentanoate + tRNA(Glu) + NADP(+) = L-glutamyl-tRNA(Glu) + NADPH + H(+). It participates in porphyrin-containing compound metabolism; protoporphyrin-IX biosynthesis; 5-aminolevulinate from L-glutamyl-tRNA(Glu): step 1/2. Functionally, catalyzes the NADPH-dependent reduction of glutamyl-tRNA(Glu) to glutamate 1-semialdehyde (GSA). The polypeptide is Glutamyl-tRNA reductase (Xylella fastidiosa (strain M12)).